The chain runs to 80 residues: Putative defensin-like protein 23 (80 aa).

Positions 1–25 (MTTTMKIMSFAMLLVLLFSIDVVEG) are cleaved as a signal peptide. Intrachain disulfides connect cysteine 31-cysteine 80, cysteine 41-cysteine 66, cysteine 50-cysteine 76, and cysteine 54-cysteine 78.

The protein belongs to the DEFL family.

It is found in the secreted. This chain is Putative defensin-like protein 23, found in Arabidopsis thaliana (Mouse-ear cress).